Consider the following 474-residue polypeptide: MLRFYHWRFPPSLAVVRMLSSPPPPHSHSPFSGGGVNSNSVGGNSKPELQFPQSQPHKLSSSPSSSLKSTVACSNAGAIRRSMATVSQAFSERTESIDSDLGSLVVVSFYKFADFPEHADFRKPLKDLCEKLRVSGGIILAPEGINGSICGIRESVEEVLAFIQRDVRLNGLRQVETPVSPEQEAIHHGHSSSSPLAAGEDAPFRWDHVRVKLKKEIVTLGIPSVSPIERVGTYVSPEEWNELISDPETVVIDVRNTYETRIGKFKGAVDPCTTAFRNFPSWVENQFALKQEGNETQAKVEKEDFSEITHKEDKAEKPKTLPRIAMYCTGGIRCEKASSLLLSQGFEEVYHLKGGILKYLEEVPKTESLWEGECFVFDKRVSVEHGLAQGTHKLCYGCKQPISDEDMEAPEYEYGVSCPYCYSKKSEEEKERARARQTQFEEWGVIGGPDKGRRPATKPDSPRKKINAKLGSSI.

Disordered stretches follow at residues 20-68 (SSPP…SSLK) and 179-198 (VSPEQEAIHHGHSSSSPLAA). Residues 53–68 (QSQPHKLSSSPSSSLK) show a composition bias toward low complexity. The Rhodanese domain occupies 245–368 (SDPETVVIDV…YLEEVPKTES (124 aa)). The active-site Cysteine persulfide intermediate is the cysteine 328. The disordered stretch occupies residues 432-474 (RARARQTQFEEWGVIGGPDKGRRPATKPDSPRKKINAKLGSSI).

The sequence is that of Rhodanese-like domain-containing protein 7 (STR7) from Arabidopsis thaliana (Mouse-ear cress).